Reading from the N-terminus, the 436-residue chain is Hydrogenobyrinate a,c-diamide synthase (436 aa).

Residues 244–435 enclose the GATase cobBQ-type domain; it reads HIAVARDDAF…MHVIDFCGEK (192 aa). Cys-327 acts as the Nucleophile in catalysis.

Belongs to the CobB/CbiA family. It depends on Mg(2+) as a cofactor.

The enzyme catalyses hydrogenobyrinate + 2 L-glutamine + 2 ATP + 2 H2O = hydrogenobyrinate a,c-diamide + 2 L-glutamate + 2 ADP + 2 phosphate + 2 H(+). It participates in cofactor biosynthesis; adenosylcobalamin biosynthesis; cob(II)yrinate a,c-diamide from precorrin-2 (aerobic route): step 9/10. Its function is as follows. Catalyzes the ATP-dependent amidation of the two carboxylate groups at positions a and c of hydrogenobyrinate, using either L-glutamine or ammonia as the nitrogen source. In Brucella anthropi (strain ATCC 49188 / DSM 6882 / CCUG 24695 / JCM 21032 / LMG 3331 / NBRC 15819 / NCTC 12168 / Alc 37) (Ochrobactrum anthropi), this protein is Hydrogenobyrinate a,c-diamide synthase.